Consider the following 562-residue polypeptide: Carboxylesterase 1E (562 aa).

The N-terminal stretch at Met-1–Gly-19 is a signal peptide. An N-linked (GlcNAc...) asparagine glycan is attached at Asn-80. Cysteines 88 and 117 form a disulfide. Ser-222 acts as the Acyl-ester intermediate in catalysis. A disulfide bridge links Cys-274 with Cys-285. The N-linked (GlcNAc...) asparagine glycan is linked to Asn-276. Catalysis depends on charge relay system residues Glu-354 and His-467. The N-linked (GlcNAc...) asparagine glycan is linked to Asn-490. The Prevents secretion from ER signature appears at His-559–Leu-562.

It belongs to the type-B carboxylesterase/lipase family.

Its subcellular location is the endoplasmic reticulum lumen. The protein localises to the microsome membrane. It catalyses the reaction a carboxylic ester + H2O = an alcohol + a carboxylate + H(+). The enzyme catalyses all-trans-retinyl hexadecanoate + H2O = all-trans-retinol + hexadecanoate + H(+). Its function is as follows. Involved in the detoxification of xenobiotics and in the activation of ester and amide prodrugs. Hydrolyzes retinyl esters. The polypeptide is Carboxylesterase 1E (Mus musculus (Mouse)).